The chain runs to 464 residues: GTPase Der (464 aa).

EngA-type G domains are found at residues 3–166 and 177–350; these read ALVA…PVLE and LQFA…QSAN. Residues 9–16, 56–60, 118–121, 183–190, 230–234, and 295–298 contribute to the GTP site; these read GRPNVGKS, DTGGV, NKAE, DTAGI, and NKWD. A KH-like domain is found at 351 to 435; that stretch reads SHLPTGELNR…PIALEFRTVK (85 aa).

It belongs to the TRAFAC class TrmE-Era-EngA-EngB-Septin-like GTPase superfamily. EngA (Der) GTPase family. As to quaternary structure, associates with the 50S ribosomal subunit.

Functionally, GTPase that plays an essential role in the late steps of ribosome biogenesis. The polypeptide is GTPase Der (Nitrosococcus oceani (strain ATCC 19707 / BCRC 17464 / JCM 30415 / NCIMB 11848 / C-107)).